Here is a 932-residue protein sequence, read N- to C-terminus: RNA-binding protein 12 (932 aa).

A disordered region spans residues 97–116 (IPPANASRSGPPPSSGMSGR). The span at 98–116 (PPANASRSGPPPSSGMSGR) shows a compositional bias: low complexity. Residues 304–379 (LYVSVHGMPF…RYVEVSPATE (76 aa)) enclose the RRM 1 domain. 2 positions are modified to phosphoserine: Ser352 and Ser375. Positions 393-424 (QNMGPSGQSHPPPQTLPRSKSPSGQKRSRSRS) are disordered. A compositionally biased stretch (polar residues) spans 408–417 (LPRSKSPSGQ). Residues Ser420, Ser422, and Ser424 each carry the phosphoserine modification. The 78-residue stretch at 430–507 (FCVYLKGLPF…RFIQVHPITK (78 aa)) folds into the RRM 2 domain. Phosphoserine is present on Ser525. Positions 717 to 734 (NGPPFNFPGNFGGSNAFG) are enriched in low complexity. The tract at residues 717–853 (NGPPFNFPGN…PGFASSSGKP (137 aa)) is disordered. The segment covering 783–811 (SGFGGGPQNFGNGPGSLGGPPGFGSGPPG) has biased composition (gly residues). Residues 824–836 (AFGPGPGPGPGPG) show a composition bias toward pro residues. The 77-residue stretch at 856–932 (TVIKVQNMPF…GSRKVKLVLG (77 aa)) folds into the RRM 3 domain.

It is found in the nucleus. This Macaca mulatta (Rhesus macaque) protein is RNA-binding protein 12 (RBM12).